Reading from the N-terminus, the 970-residue chain is uncharacterized protein (970 aa).

Residues 11-31 (WILKIGTILGLVCLGLFGVIF) traverse the membrane as a helical segment. A disordered region spans residues 366–387 (ASNSNDNNNQNNNNNNNSSDVI). The span at 367-387 (SNSNDNNNQNNNNNNNSSDVI) shows a compositional bias: low complexity. Transmembrane regions (helical) follow at residues 515–535 (FASS…LLTL), 537–557 (YKLL…SSLV), 558–578 (IFSA…FFVI), 614–634 (FFAN…VIYL), 645–665 (LMAI…IVLI), 726–746 (FLFV…LYLV), 762–782 (SNGI…YCLI), 789–809 (CLSY…VMYL), 816–836 (IDQS…FFAA), 877–897 (IESS…FGGI), and 903–923 (LVIF…AFLP).

The protein resides in the cell membrane. This is an uncharacterized protein from Mycoplasma genitalium (strain ATCC 33530 / DSM 19775 / NCTC 10195 / G37) (Mycoplasmoides genitalium).